A 93-amino-acid polypeptide reads, in one-letter code: Protein E7 (93 aa).

The E7 terminal domain stretch occupies residues 1 to 43 (MIGKEATIPEVVLELQELVQPTADLHCYEELTEEPAEEEQCLT). Residues 25–29 (LHCYE) carry the LXCXE motif; interaction with host RB1 and TMEM173/STING motif. Residues 51 to 86 (CGCGARLRLYVLATNLGIRAQQELLLGDIQLVCPEC) fold into a zinc finger. A Nuclear export signal motif is present at residues 68–76 (IRAQQELLL).

Belongs to the papillomaviridae E7 protein family. As to quaternary structure, homodimer. Homooligomer. Interacts with host RB1; this interaction induces dissociation of RB1-E2F1 complex thereby disrupting RB1 activity. Interacts with host EP300; this interaction represses EP300 transcriptional activity. Interacts with protein E2; this interaction inhibits E7 oncogenic activity. Interacts with host TMEM173/STING; this interaction impairs the ability of TMEM173/STING to sense cytosolic DNA and promote the production of type I interferon (IFN-alpha and IFN-beta). In terms of processing, highly phosphorylated.

The protein resides in the host cytoplasm. The protein localises to the host nucleus. Its function is as follows. Plays a role in viral genome replication by driving entry of quiescent cells into the cell cycle. Stimulation of progression from G1 to S phase allows the virus to efficiently use the cellular DNA replicating machinery to achieve viral genome replication. E7 protein has both transforming and trans-activating activities. Induces the disassembly of the E2F1 transcription factor from RB1, with subsequent transcriptional activation of E2F1-regulated S-phase genes. Interferes with host histone deacetylation mediated by HDAC1 and HDAC2, leading to transcription activation. Also plays a role in the inhibition of both antiviral and antiproliferative functions of host interferon alpha. Interaction with host TMEM173/STING impairs the ability of TMEM173/STING to sense cytosolic DNA and promote the production of type I interferon (IFN-alpha and IFN-beta). The chain is Protein E7 from Human papillomavirus 9.